Reading from the N-terminus, the 251-residue chain is L-ascorbate peroxidase 2, cytosolic (251 aa).

The active-site Proton acceptor is the His-43. The tract at residues Glu-113–Gln-137 is disordered. The segment covering Gly-119–Leu-132 has biased composition (basic and acidic residues). Position 164 (His-164) interacts with heme b. 5 residues coordinate K(+): Thr-165, Thr-181, Asn-183, Ile-186, and Asp-188.

This sequence belongs to the peroxidase family. Ascorbate peroxidase subfamily. Heme b serves as cofactor. As to expression, expressed in aerial vegetative parts and reproductive organs. Expressed in roots, leaves, stems and flowers. Expressed in young leaves, internodes, blade ears, stems and anthers.

Its subcellular location is the cytoplasm. The catalysed reaction is L-ascorbate + H2O2 = L-dehydroascorbate + 2 H2O. Its activity is regulated as follows. Inhibited by p-chloromercuriphenylsulfonic acid (CMPSA). Functionally, plays a key role in hydrogen peroxide removal. Plays an important role in plant growth and development by protecting the seedlings from abiotic stresses through scavenging reactive oxygen species. Required for pollen viability. This chain is L-ascorbate peroxidase 2, cytosolic, found in Oryza sativa subsp. japonica (Rice).